The chain runs to 121 residues: Large ribosomal subunit protein uL18 (121 aa).

It belongs to the universal ribosomal protein uL18 family. As to quaternary structure, part of the 50S ribosomal subunit; part of the 5S rRNA/L5/L18/L25 subcomplex. Contacts the 5S and 23S rRNAs.

Its function is as follows. This is one of the proteins that bind and probably mediate the attachment of the 5S RNA into the large ribosomal subunit, where it forms part of the central protuberance. The polypeptide is Large ribosomal subunit protein uL18 (Roseiflexus castenholzii (strain DSM 13941 / HLO8)).